A 1574-amino-acid polypeptide reads, in one-letter code: Myosin-2 (1574 aa).

N-acetylserine is present on serine 2. Residues 4-57 (EVGTRCWYPHKELGWIGAEVIKNEFNDGKYHLELQLEDDEIVSVDTKDLNNDKD) form the Myosin N-terminal SH3-like domain. Residues 70 to 781 (EATEDLTSLS…MLAYLEKLRS (712 aa)) form the Myosin motor domain. 164–171 (GESGAGKT) serves as a coordination point for ATP. An actin-binding region spans residues 443–523 (FIGVLDIYGF…LGILSLLDEE (81 aa)). 6 consecutive IQ domains span residues 784–806 (MHNS…QYLQ), 807–831 (ISQA…NDEM), 832–855 (KVNC…VFSV), 856–879 (LRTI…KQEH), 880–902 (EYNA…RFLR), and 903–932 (TKKD…DAKS). Residues 933 to 1088 (VNHLKEVSYK…RLQTAMSLGT (156 aa)) adopt a coiled-coil conformation. Positions 1087 to 1574 (GTVTTSVLPQ…VAQQVVQDGH (488 aa)) are non alpha-helical, tail domain. A Phosphothreonine modification is found at threonine 1097. Serine 1121 is modified (phosphoserine). A Dilute domain is found at 1226-1501 (AQVLTTIQKV…LRYVADIVKK (276 aa)).

Belongs to the TRAFAC class myosin-kinesin ATPase superfamily. Myosin family. As to quaternary structure, homodimer. Interacts with calmodulin (CMD1) and the myosin light chain MLC1 through its IQ repeats. Binds to the membrane receptors SEC4 and VAC17 to transport secretory vesicles and the vacuole, respectively. Binds to KAR9, which transports BIM1-coated cytoplasmic microtubules that are attached to the spindle pole body into the emerging bud, thereby correctly orienting the mitotic spindle. Interacts with YPT11 and MMR1 to accelerate mitochondrial distribution to the bud. Interacts with SHE4 and localizes it to the bud tip. Interacts with RHO3 and SMY1, putative regulators of MYO2 function. Interacts with SRO7.

It is found in the bud neck. The protein localises to the bud tip. Functionally, myosin heavy chain that is required for the cell cycle-regulated transport of various organelles and proteins for their segregation. Functions by binding with its tail domain to receptor proteins on organelles and exerting force with its N-terminal motor domain against actin filaments, thereby transporting its cargo along polarized actin cables. Essential for the delivery of secretory vesicles to sites of active growth during bud emergence and cytokinesis. Required for segregation and inheritance of peroxisomes, late Golgi compartments, mitochondria and the vacuole to the daughter cell during cell division. Also required for correct alignment of the spindle during mitosis. The polypeptide is Myosin-2 (MYO2) (Saccharomyces cerevisiae (strain ATCC 204508 / S288c) (Baker's yeast)).